An 82-amino-acid polypeptide reads, in one-letter code: Small ribosomal subunit protein bS16 (82 aa).

Belongs to the bacterial ribosomal protein bS16 family.

This Serratia proteamaculans (strain 568) protein is Small ribosomal subunit protein bS16.